Here is a 325-residue protein sequence, read N- to C-terminus: Tetraacyldisaccharide 4'-kinase (325 aa).

55-62 (TAGGNGKT) contacts ATP.

This sequence belongs to the LpxK family.

The enzyme catalyses a lipid A disaccharide + ATP = a lipid IVA + ADP + H(+). Its pathway is glycolipid biosynthesis; lipid IV(A) biosynthesis; lipid IV(A) from (3R)-3-hydroxytetradecanoyl-[acyl-carrier-protein] and UDP-N-acetyl-alpha-D-glucosamine: step 6/6. Functionally, transfers the gamma-phosphate of ATP to the 4'-position of a tetraacyldisaccharide 1-phosphate intermediate (termed DS-1-P) to form tetraacyldisaccharide 1,4'-bis-phosphate (lipid IVA). The chain is Tetraacyldisaccharide 4'-kinase from Enterobacter sp. (strain 638).